A 257-amino-acid polypeptide reads, in one-letter code: GTP cyclohydrolase FolE2 (257 aa).

Belongs to the GTP cyclohydrolase IV family.

It catalyses the reaction GTP + H2O = 7,8-dihydroneopterin 3'-triphosphate + formate + H(+). Its pathway is cofactor biosynthesis; 7,8-dihydroneopterin triphosphate biosynthesis; 7,8-dihydroneopterin triphosphate from GTP: step 1/1. Functionally, converts GTP to 7,8-dihydroneopterin triphosphate. The polypeptide is GTP cyclohydrolase FolE2 (Dictyoglomus turgidum (strain DSM 6724 / Z-1310)).